The primary structure comprises 403 residues: SEC14-like protein 2 (403 aa).

K51 is modified (N6-succinyllysine). In terms of domain architecture, CRAL-TRIO spans 76–249; it reads PPEVIQQYLS…EYGGTMTDPD (174 aa). An N6-succinyllysine mark is found at K253 and K257. A GOLD domain is found at 275 to 383; sequence KQQYEHSVQI…AKKVNFTVEV (109 aa). K393 is modified (N6-succinyllysine).

In terms of assembly, monomer. Widely expressed. Strong expression in liver, brain and prostate.

It is found in the cytoplasm. It localises to the nucleus. In terms of biological role, carrier protein. Binds to some hydrophobic molecules and promotes their transfer between the different cellular sites. Binds with high affinity to alpha-tocopherol. Also binds with a weaker affinity to other tocopherols and to tocotrienols. May have a transcriptional activatory activity via its association with alpha-tocopherol. Probably recognizes and binds some squalene structure, suggesting that it may regulate cholesterol biosynthesis by increasing the transfer of squalene to a metabolic active pool in the cell. The polypeptide is SEC14-like protein 2 (SEC14L2) (Homo sapiens (Human)).